Reading from the N-terminus, the 229-residue chain is uncharacterized protein (229 aa).

The ABC transporter domain occupies 2–229 (LTLNNISKSY…LDERGDISHA (228 aa)). 38-45 (GPSGSGKS) provides a ligand contact to ATP.

Belongs to the ABC transporter superfamily.

This is an uncharacterized protein from Bacillus subtilis (strain 168).